The following is a 675-amino-acid chain: Electrogenic aspartate/glutamate antiporter SLC25A13, mitochondrial (675 aa).

Position 2 is an N-acetylalanine (Ala2). Residues 2–295 (AAAKVALTKR…TLADIERIAP (294 aa)) are regulatory N-terminal domain. At 2 to 331 (AAAKVALTKR…LLQVAESAYR (330 aa)) the chain is on the mitochondrial intermembrane side. 4 consecutive EF-hand domains span residues 51 to 86 (SQPNPKTVELLSGVVDQTKDGLISFQEFVAFESVLC), 87 to 122 (APDALFMVAFQLFDKAGKGEVTFEDVKQVFGQTTIH), 125 to 157 (IPFNWDSEFVQLHFGKERKRHLTYAEFTQFLLE), and 158 to 193 (IQLEHAKQAFVQRDNARTGRVTAIDFRDIMVTIRPH). Positions 66, 68, 70, 72, and 77 each coordinate Ca(2+). The interval 296–311 (LEEGTLPFNLAEAQRQ) is linker loop domain. The tract at residues 321 to 612 (VLLQVAESAY…LQRWFYIDFG (292 aa)) is carrier domain. 3 Solcar repeats span residues 326-418 (AESA…VRDK), 426-510 (VPLA…VKAS), and 518-606 (VSPG…LQRW). Residues 332-349 (FGLGSVAGAVGATAVYPI) traverse the membrane as a helical segment. The Mitochondrial matrix segment spans residues 350-392 (DLVKTRMQNQRSTGSFVGELMYKNSFDCFKKVLRYEGFFGLYR). N6-acetyllysine occurs at positions 353 and 372. A helical membrane pass occupies residues 393 to 412 (GLLPQLLGVAPEKAIKLTVN). Topologically, residues 413–435 (DFVRDKFMHKDGSVPLAAEILAG) are mitochondrial intermembrane. A helical transmembrane segment spans residues 436–449 (GCAGGSQVIFTNPL). At 450–484 (EIVKIRLQVAGEITTGPRVSALSVVRDLGFFGIYK) the chain is on the mitochondrial matrix side. Position 453 is an N6-methyllysine (Lys453). Lys484 is subject to N6-acetyllysine; alternate. Lys484 is subject to N6-succinyllysine; alternate. A helical transmembrane segment spans residues 485 to 504 (GAKACFLRDIPFSAIYFPCY). The Mitochondrial intermembrane segment spans residues 505–523 (AHVKASFANEDGQVSPGSL). A helical membrane pass occupies residues 524–541 (LLAGAIAGMPAASLVTPA). Residues 542-580 (DVIKTRLQVAARAGQTTYSGVIDCFRKILREEGPKALWK) lie on the Mitochondrial matrix side of the membrane. Lys580 carries the N6-succinyllysine modification. A helical membrane pass occupies residues 581-600 (GAGARVFRSSPQFGVTLLTY). Residues 601 to 675 (ELLQRWFYID…STSKAIGGGP (75 aa)) lie on the Mitochondrial intermembrane side of the membrane. The C-terminal domain stretch occupies residues 613–675 (GVKPMGSEPV…STSKAIGGGP (63 aa)). Lys662 carries the post-translational modification N6-acetyllysine. Position 666 is a phosphoserine (Ser666).

This sequence belongs to the mitochondrial carrier (TC 2.A.29) family. In terms of assembly, homodimer (via N-terminus). As to expression, high levels in liver and low levels in kidney, pancreas, placenta, heart and brain.

Its subcellular location is the mitochondrion inner membrane. It catalyses the reaction L-aspartate(in) + L-glutamate(out) + H(+)(out) = L-aspartate(out) + L-glutamate(in) + H(+)(in). The enzyme catalyses 3-sulfino-L-alanine(out) + L-glutamate(in) + H(+)(in) = 3-sulfino-L-alanine(in) + L-glutamate(out) + H(+)(out). The catalysed reaction is 3-sulfino-L-alanine(out) + L-aspartate(in) = 3-sulfino-L-alanine(in) + L-aspartate(out). Its activity is regulated as follows. Activated by calcium-binding in the mitochondrial intermembrane space. Inhibited by pyridoxal 5'-phosphate, bathophenathroline, mercurials, diethyl pyrocarbonate and N-ethylmaleimide. Mitochondrial electrogenic aspartate/glutamate antiporter that favors efflux of aspartate and entry of glutamate and proton within the mitochondria as part of the malate-aspartate shuttle. Also mediates the uptake of L-cysteinesulfinate (3-sulfino-L-alanine) by mitochondria in exchange of L-glutamate and proton. Can also exchange L-cysteinesulfinate with aspartate in their anionic form without any proton translocation. Lacks transport activity towards gamma-aminobutyric acid (GABA). In Homo sapiens (Human), this protein is Electrogenic aspartate/glutamate antiporter SLC25A13, mitochondrial.